A 511-amino-acid chain; its full sequence is MSLTDKELFELNKKAVTEGFKIKPRINYTPVGGVNGPLVILDNVKFPRYNEIVNLTLPDGTVRQGQVLEVRGTKAIVQVFEGTSGIDVKKTRVEFTGENLKIPVSEDMLGRIFDGSGRPIDKGPKIFAEDYLDINGSPINPYARIYPEEMISTGVSAIDTMNSIARGQKIPIFSASGLPHNEIAAQICRQAGLVRPTKDVHDGHEENFSIVFAAMGVNLETSRFFKQDFEENGSLERTTLFLNLANDPTIERIITPRLALTTAEFLAYQTERHVLTILTDMSSYADALREVSAAREEVPGRRGYPGYMYTDLSTIYERAGRVEGRNGSITQVPILTMPNDDITHPIPDLTGYITEGQIFIDRQLHNRGIYPPINVLPSLSRLMKSAIGEGMTRKDHGDVSNQLYAKYAIGKDAAAMKAVVGEEALSTEDKLSLEFLEKFEKNFISQGAYENRTIFESLDLAWSLLRIYPKEMLNRISPKILEEFYGRDREQDDDEEEEEDPDKSGDKLIDA.

Arginine 381 is an ATP binding site. The segment at 484–511 (FYGRDREQDDDEEEEEDPDKSGDKLIDA) is disordered. Positions 491–501 (QDDDEEEEEDP) are enriched in acidic residues. The segment covering 502 to 511 (DKSGDKLIDA) has biased composition (basic and acidic residues).

This sequence belongs to the ATPase alpha/beta chains family. In terms of assembly, V-ATPase is a heteromultimeric enzyme composed of a peripheral catalytic V1 complex (components A to H) attached to an integral membrane V0 proton pore complex (components: a, c, c', c'', d, e, f and VOA1).

The protein localises to the vacuole membrane. Its function is as follows. Non-catalytic subunit of the V1 complex of vacuolar(H+)-ATPase (V-ATPase), a multisubunit enzyme composed of a peripheral complex (V1) that hydrolyzes ATP and a membrane integral complex (V0) that translocates protons. V-ATPase is responsible for acidifying and maintaining the pH of intracellular compartments. The protein is V-type proton ATPase subunit B (VMA2) of Candida tropicalis (Yeast).